The chain runs to 100 residues: NADH-quinone oxidoreductase subunit K (100 aa).

Transmembrane regions (helical) follow at residues 4-24, 28-48, and 60-80; these read LQHG…GLLI, LLFM…AFVV, and VMYI…LALL.

Belongs to the complex I subunit 4L family. NDH-1 is composed of 13 different subunits. Subunits NuoA, H, J, K, L, M, N constitute the membrane sector of the complex.

The protein localises to the cell inner membrane. The catalysed reaction is a quinone + NADH + 5 H(+)(in) = a quinol + NAD(+) + 4 H(+)(out). NDH-1 shuttles electrons from NADH, via FMN and iron-sulfur (Fe-S) centers, to quinones in the respiratory chain. The immediate electron acceptor for the enzyme in this species is believed to be ubiquinone. Couples the redox reaction to proton translocation (for every two electrons transferred, four hydrogen ions are translocated across the cytoplasmic membrane), and thus conserves the redox energy in a proton gradient. The protein is NADH-quinone oxidoreductase subunit K of Edwardsiella ictaluri (strain 93-146).